The sequence spans 122 residues: Ribonuclease P protein component (122 aa).

The protein belongs to the RnpA family. As to quaternary structure, consists of a catalytic RNA component (M1 or rnpB) and a protein subunit.

The catalysed reaction is Endonucleolytic cleavage of RNA, removing 5'-extranucleotides from tRNA precursor.. Its function is as follows. RNaseP catalyzes the removal of the 5'-leader sequence from pre-tRNA to produce the mature 5'-terminus. It can also cleave other RNA substrates such as 4.5S RNA. The protein component plays an auxiliary but essential role in vivo by binding to the 5'-leader sequence and broadening the substrate specificity of the ribozyme. The sequence is that of Ribonuclease P protein component from Lactobacillus johnsonii (strain CNCM I-12250 / La1 / NCC 533).